The sequence spans 109 residues: Cysteine-rich venom protein 7 (109 aa).

A signal peptide spans 1 to 21 (MSKVFVIILVALMVAISIASA). 5 cysteine pairs are disulfide-bonded: cysteine 30–cysteine 47, cysteine 37–cysteine 52, cysteine 46–cysteine 58, cysteine 70–cysteine 90, and cysteine 78–cysteine 98.

In terms of tissue distribution, expressed by the venom gland.

It localises to the secreted. This is Cysteine-rich venom protein 7 from Pimpla hypochondriaca (Parasitoid wasp).